Consider the following 354-residue polypeptide: MGCTLSAEERAALERSKQIEKNLKEDGVTAAKDVKLLLLGAGESGKSTIVKQMKIIHEDGFSGEDVKQYKPVVYSNTIQSLAAIVRAMDTLGIEYGDKERRADAKMVCDVVSRMEDTEPYSPELLSAMVRLWADSGIQECFNRSREYQLNDSAKYYLDSLDRIGAPDYQPTEQDILRTRVKTTGIVETHFTFKNLHFRLFDVGGQRSERKKWWHCFEDVTAIIFCVALTGYDQVLHEDETTNRMHESLKLFDSICNNKWFTDTSIILFLNKKDIFQEKIKSSPLTICFPEYTGPNSFTEAVAHTQHQYESRNKSENKEIYTHITCATDTQNIQFVFDAVTDVIIAYNLRGCGLY.

Gly2 carries the N-myristoyl glycine lipid modification. The S-palmitoyl cysteine moiety is linked to residue Cys3. The G-alpha domain maps to 32–354 (KDVKLLLLGA…AYNLRGCGLY (323 aa)). The tract at residues 35 to 48 (KLLLLGAGESGKST) is G1 motif. GTP is bound by residues Glu43, Lys46, Ser47, Thr48, Ser152, Leu176, Arg177, Thr178, and Arg179. Residue Ser47 participates in Mg(2+) binding. Residues 174-182 (DILRTRVKT) are G2 motif. Residue Thr182 coordinates Mg(2+). A G3 motif region spans residues 197–206 (FRLFDVGGQR). The G4 motif stretch occupies residues 266-273 (ILFLNKKD). Residues Asn270, Asp273, and Cys325 each coordinate GTP. The G5 motif stretch occupies residues 324–329 (TCATDT).

This sequence belongs to the G-alpha family. G(i/o/t/z) subfamily. In terms of assembly, g proteins are composed of 3 units; alpha, beta and gamma.

It carries out the reaction GTP + H2O = GDP + phosphate + H(+). Guanine nucleotide-binding proteins (G proteins) function as transducers downstream of G protein-coupled receptors (GPCRs) in numerous signaling cascades. The alpha chain contains the guanine nucleotide binding site and alternates between an active, GTP-bound state and an inactive, GDP-bound state. Signaling by an activated GPCR promotes GDP release and GTP binding. The alpha subunit has a low GTPase activity that converts bound GTP to GDP, thereby terminating the signal. Both GDP release and GTP hydrolysis are modulated by numerous regulatory proteins. Signaling is mediated via effector proteins, such as adenylate cyclase. Inhibits adenylate cyclase activity, leading to decreased intracellular cAMP levels. The polypeptide is Guanine nucleotide-binding protein G(o) subunit alpha (gna0) (Xenopus laevis (African clawed frog)).